The chain runs to 377 residues: 2-aminoethylphosphonate--pyruvate transaminase (377 aa).

At Lys194 the chain carries N6-(pyridoxal phosphate)lysine.

Belongs to the class-V pyridoxal-phosphate-dependent aminotransferase family. PhnW subfamily. As to quaternary structure, homodimer. Requires pyridoxal 5'-phosphate as cofactor.

It catalyses the reaction (2-aminoethyl)phosphonate + pyruvate = phosphonoacetaldehyde + L-alanine. Involved in phosphonate degradation. This Cupriavidus taiwanensis (strain DSM 17343 / BCRC 17206 / CCUG 44338 / CIP 107171 / LMG 19424 / R1) (Ralstonia taiwanensis (strain LMG 19424)) protein is 2-aminoethylphosphonate--pyruvate transaminase.